The chain runs to 202 residues: Matrix protein (202 aa).

Positions 35–38 (PPEY) match the PPXY motif motif. The essential for glycoprotein binding stretch occupies residues 115–151 (KLRRTLIFQWADSRGPLEGEELEYSQEITWDDDTEFV).

The protein belongs to the lyssavirus matrix protein family. Homomultimer. Interacts with nucleoprotein and with the cytoplasmic domain of glycoprotein. Interacts with host ATP6V1A; this interaction plays an important role in virion uncoating after viral entry.

It localises to the virion membrane. It is found in the host endomembrane system. The protein localises to the host cytoplasm. Functionally, plays a major role in assembly, budding and uncoating of virion after membrane fusion. Completely covers the ribonucleoprotein coil and keep it in condensed bullet-shaped form. Inhibits viral transcription and stimulates replication. Plays a major role in early induction of TRAIL-mediated apoptosis in infected neurons. Inhibits the integrated stress response (ISR) in the infected cell by blocking the formation of stress granules. The chain is Matrix protein (M) from Homo sapiens (Human).